The following is a 313-amino-acid chain: Ribose-phosphate pyrophosphokinase (313 aa).

ATP-binding positions include 40–42 and 98–99; these read DGE and RQ. Residues histidine 132 and aspartate 172 each contribute to the Mg(2+) site. Residue lysine 195 is part of the active site. D-ribose 5-phosphate contacts are provided by residues arginine 197, aspartate 221, and 225-229; that span reads DTAGT.

It belongs to the ribose-phosphate pyrophosphokinase family. Class I subfamily. As to quaternary structure, homohexamer. Requires Mg(2+) as cofactor.

It localises to the cytoplasm. The catalysed reaction is D-ribose 5-phosphate + ATP = 5-phospho-alpha-D-ribose 1-diphosphate + AMP + H(+). Its pathway is metabolic intermediate biosynthesis; 5-phospho-alpha-D-ribose 1-diphosphate biosynthesis; 5-phospho-alpha-D-ribose 1-diphosphate from D-ribose 5-phosphate (route I): step 1/1. Its function is as follows. Involved in the biosynthesis of the central metabolite phospho-alpha-D-ribosyl-1-pyrophosphate (PRPP) via the transfer of pyrophosphoryl group from ATP to 1-hydroxyl of ribose-5-phosphate (Rib-5-P). The protein is Ribose-phosphate pyrophosphokinase of Porphyromonas gingivalis (strain ATCC BAA-308 / W83).